The following is a 103-amino-acid chain: Large ribosomal subunit protein bL21 (103 aa).

This sequence belongs to the bacterial ribosomal protein bL21 family. As to quaternary structure, part of the 50S ribosomal subunit. Contacts protein L20.

Its function is as follows. This protein binds to 23S rRNA in the presence of protein L20. The protein is Large ribosomal subunit protein bL21 of Polynucleobacter asymbioticus (strain DSM 18221 / CIP 109841 / QLW-P1DMWA-1) (Polynucleobacter necessarius subsp. asymbioticus).